Consider the following 283-residue polypeptide: Large ribosomal subunit protein uL4 (283 aa).

Belongs to the universal ribosomal protein uL4 family. As to quaternary structure, part of the 50S ribosomal subunit.

Its function is as follows. One of the primary rRNA binding proteins, this protein initially binds near the 5'-end of the 23S rRNA. It is important during the early stages of 50S assembly. It makes multiple contacts with different domains of the 23S rRNA in the assembled 50S subunit and ribosome. In terms of biological role, forms part of the polypeptide exit tunnel. The protein is Large ribosomal subunit protein uL4 of Pyrobaculum aerophilum (strain ATCC 51768 / DSM 7523 / JCM 9630 / CIP 104966 / NBRC 100827 / IM2).